The following is a 356-amino-acid chain: UDP-N-acetylglucosamine--N-acetylmuramyl-(pentapeptide) pyrophosphoryl-undecaprenol N-acetylglucosamine transferase (356 aa).

Positions 166, 196, and 290 each coordinate UDP-N-acetyl-alpha-D-glucosamine.

Belongs to the glycosyltransferase 28 family. MurG subfamily.

It localises to the cell membrane. It catalyses the reaction Mur2Ac(oyl-L-Ala-gamma-D-Glu-L-Lys-D-Ala-D-Ala)-di-trans,octa-cis-undecaprenyl diphosphate + UDP-N-acetyl-alpha-D-glucosamine = beta-D-GlcNAc-(1-&gt;4)-Mur2Ac(oyl-L-Ala-gamma-D-Glu-L-Lys-D-Ala-D-Ala)-di-trans,octa-cis-undecaprenyl diphosphate + UDP + H(+). It functions in the pathway cell wall biogenesis; peptidoglycan biosynthesis. In terms of biological role, cell wall formation. Catalyzes the transfer of a GlcNAc subunit on undecaprenyl-pyrophosphoryl-MurNAc-pentapeptide (lipid intermediate I) to form undecaprenyl-pyrophosphoryl-MurNAc-(pentapeptide)GlcNAc (lipid intermediate II). In Staphylococcus aureus (strain Mu3 / ATCC 700698), this protein is UDP-N-acetylglucosamine--N-acetylmuramyl-(pentapeptide) pyrophosphoryl-undecaprenol N-acetylglucosamine transferase.